The chain runs to 278 residues: HTH-type transcriptional activator RhaS (278 aa).

The 99-residue stretch at 174–272 (NQLLAWLEDH…DWSPRDIRQG (99 aa)) folds into the HTH araC/xylS-type domain. 2 DNA-binding regions (H-T-H motif) span residues 191 to 212 (ESIADKFSLSLRTLHRQLKQQT) and 239 to 262 (VTDIAYRCGFGDSNHFSTLFRREF).

In terms of assembly, binds DNA as a dimer.

It is found in the cytoplasm. Activates expression of the rhaBAD and rhaT operons. This Citrobacter koseri (strain ATCC BAA-895 / CDC 4225-83 / SGSC4696) protein is HTH-type transcriptional activator RhaS.